The chain runs to 502 residues: Neuronal acetylcholine receptor subunit alpha-7 (502 aa).

The N-terminal stretch at 1-22 is a signal peptide; the sequence is MCGGRGGIWLALAAALLHVSLQ. At 23 to 233 the chain is on the extracellular side; sequence GEFQRRLYKE…VTMRRRTLYY (211 aa). 2 residues coordinate Ca(2+): R42 and V44. N-linked (GlcNAc...) asparagine glycans are attached at residues N46, N90, and N133. The cysteines at positions 150 and 164 are disulfide-linked. Ca(2+) contacts are provided by S172 and Y210. An intrachain disulfide couples C212 to C213. The next 3 helical transmembrane spans lie at 234 to 254, 262 to 282, and 295 to 315; these read GLNL…VFLL, ISLG…VAEI, and QYFA…VIVL. Residues 260-267 form an essential for TMEM35A/NACHO-mediated proper subunit assembly and trafficking to cell membrane region; that stretch reads EKISLGIT. Residues 316-469 are Cytoplasmic-facing; that stretch reads RYHHHDPDGG…WKFAACVVDR (154 aa). The chain crosses the membrane as a helical span at residues 470 to 490; the sequence is LCLMAFSVFTIICTIGILMSA.

It belongs to the ligand-gated ion channel (TC 1.A.9) family. Acetylcholine receptor (TC 1.A.9.1) subfamily. Alpha-7/CHRNA7 sub-subfamily. In terms of assembly, homopentamer. Can also form heteropentamers with CHRNB2, mainly found in basal forebrain cholinergic neurons. Interacts with RIC3; which is required for proper folding and assembly. Interacts with LYPD6. Interacts with CANX. Glycosylations at Asn-46, Asn-90 and Asn-133 are essential for TMEM35A/NACHO-mediated proper subunit assembly and trafficking to the cell membrane. As to expression, expressed in neurons. Expressed in umbrella cells of urothelium (at protein level).

It is found in the postsynaptic cell membrane. The protein resides in the cell membrane. The catalysed reaction is Ca(2+)(in) = Ca(2+)(out). It catalyses the reaction K(+)(in) = K(+)(out). It carries out the reaction Na(+)(in) = Na(+)(out). The enzyme catalyses choline(out) = choline(in). The catalysed reaction is NH4(+)(in) = NH4(+)(out). It catalyses the reaction L-arginine(in) = L-arginine(out). It carries out the reaction guanidine(out) = guanidine(in). With respect to regulation, activated by a myriad of ligands such as acetylcholine, cytisine, nicotine, choline and epibatidine. Oligomeric amyloid-beta protein 42 activates specifially CHRNA7:CHRNB2 nAchRs. Activity is modulated by positive allosteric modulators (PAMs), such as flavonoids, with a wide range of chemical diversity, pharmacological sensitivity and efficacy. AChR activity is inhibited by the antagonists alpha-conotoxons RgIA, ImI and ImII, small disulfide-constrained peptides from cone snails. Alpha-conotoxin PnIC selectively inhibits CHRNA7:CHRNB2 over CHRNA7 homopentamer. Component of neuronal acetylcholine receptors (nAChRs) that function as pentameric, ligand-gated cation channels with high calcium permeability among other activities. nAChRs are excitatory neurotrasnmitter receptors formed by a collection of nAChR subunits known to mediate synaptic transmission in the nervous system and the neuromuscular junction. Each nAchR subunit confers differential attributes to channel properties, including activation, deactivation and desensitization kinetics, pH sensitivity, cation permeability, and binding to allosteric modulators. CHRNA7 forms homopentameric neuronal acetylcholine receptors abundantly expressed in the central nervous system, characterized by fast desensitization and high calcium permeability. Also forms heteropentamers with CHRNB2, mainly expressed in basal forebrain cholinergic neurons. Involved in the modulation of calcium-dependent signaling pathways and influences the release of neurotransmitters, including dopamine, glutamate and GABA. Also expressed in non-neuronal cells such as immune cells like lymphocytes, monocytes and macrophages. In T cells, activation induces metabotropic signaling that results in an increase of intracellular Ca2+ concentrations, independent of ionotropic receptor functions. In macrophages, required for acetylcholine-mediated inhibition of TNF and other inflammatory cytokine release. Once activated by acetylcholine, nicotine or other agonists, selectively inhibits production of pro-inflammatory cytokines while leaving anti-inflammatory cytokines undisturbed. Stimulates the cholinergic anti-inflammatory pathway, controlling inflammation by inhibiting NFKB nuclear translocation and activating the JAK2-STAT3 pathway, independently of ion channel activity. Also expressed in the urothelium where it modulates reflex bladder activity by increasing intracellular calcium through internal stores and decreasing basal ATP release. The polypeptide is Neuronal acetylcholine receptor subunit alpha-7 (Chrna7) (Rattus norvegicus (Rat)).